A 69-amino-acid polypeptide reads, in one-letter code: Ribosome modulation factor (69 aa).

The protein belongs to the ribosome modulation factor family.

It is found in the cytoplasm. Its function is as follows. During stationary phase, converts 70S ribosomes to an inactive dimeric form (100S ribosomes). The polypeptide is Ribosome modulation factor (Chromohalobacter salexigens (strain ATCC BAA-138 / DSM 3043 / CIP 106854 / NCIMB 13768 / 1H11)).